A 158-amino-acid chain; its full sequence is C-type lectin lectoxin-Thr1 (158 aa).

The N-terminal stretch at 1–23 (MGRFIFATLGLLLVAFSINGAKG) is a signal peptide. Disulfide bonds link Cys26–Cys37, Cys54–Cys154, and Cys129–Cys146. A C-type lectin domain is found at 33–155 (LKGFCYKVFN…CASTRAYLCK (123 aa)). The short motif at 119 to 121 (EPN) is the Mannose-binding element. 3 residues coordinate Ca(2+): Glu127, Asn142, and Asp143.

It belongs to the true venom lectin family. Expressed by the venom gland.

It is found in the secreted. Its function is as follows. Mannose-binding lectin which recognizes specific carbohydrate structures and agglutinates a variety of animal cells by binding to cell-surface glycoproteins and glycolipids. May be a calcium-dependent lectin. The polypeptide is C-type lectin lectoxin-Thr1 (Thrasops jacksonii (Jackson's black tree snake)).